Here is a 232-residue protein sequence, read N- to C-terminus: Ornithine carbamoyltransferase (232 aa).

Residues glutamine 15, arginine 39, and 66 to 69 (HPTQ) each bind carbamoyl phosphate. L-ornithine contacts are provided by residues asparagine 99, aspartate 163, and 167 to 168 (SM). Carbamoyl phosphate is bound by residues 204-207 (HCLP) and threonine 232.

Belongs to the aspartate/ornithine carbamoyltransferase superfamily. OTCase family.

The protein resides in the cytoplasm. The catalysed reaction is carbamoyl phosphate + L-ornithine = L-citrulline + phosphate + H(+). It participates in amino-acid biosynthesis; L-arginine biosynthesis; L-arginine from L-ornithine and carbamoyl phosphate: step 1/3. Reversibly catalyzes the transfer of the carbamoyl group from carbamoyl phosphate (CP) to the N(epsilon) atom of ornithine (ORN) to produce L-citrulline. This chain is Ornithine carbamoyltransferase (argF), found in Neisseria perflava.